Here is a 366-residue protein sequence, read N- to C-terminus: 5-hydroxytryptamine receptor 1F (366 aa).

Topologically, residues 1–24 are extracellular; sequence MDFLNSSDQNLTSEELLNRMPSKI. N5 and N10 each carry an N-linked (GlcNAc...) asparagine glycan. The helical transmembrane segment at 25–49 threads the bilayer; that stretch reads LVSLTLSGLALMTTTINCLVITAII. The Cytoplasmic portion of the chain corresponds to 50-59; the sequence is VTRKLHHPAN. The chain crosses the membrane as a helical span at residues 60 to 81; sequence YLICSLAVTDFLVAVLVMPFSI. Over 82–96 the chain is Extracellular; the sequence is VYIVRESWIMGQGLC. A disulfide bridge links C96 with C172. The chain crosses the membrane as a helical span at residues 97–119; the sequence is DLWLSVDIICCTCSILHLSAIAL. Serotonin contacts are provided by D103 and C107. The DRY motif; important for ligand-induced conformation changes signature appears at 120–122; sequence DRY. Topologically, residues 120–139 are cytoplasmic; the sequence is DRYRAITDAVEYARKRTPRH. Residues 140–159 traverse the membrane as a helical segment; the sequence is AGITITTVWVISVFISVPPL. Topologically, residues 160–178 are extracellular; that stretch reads FWRHQGNSRDDQCIIKHDH. Residues 179–202 traverse the membrane as a helical segment; sequence IVSTIYSTFGAFYIPLVLILILYY. Topologically, residues 203-291 are cytoplasmic; sequence KIYRAARTLY…KISGTRERKA (89 aa). The helical transmembrane segment at 292–315 threads the bilayer; the sequence is ATTLGLILGAFVICWLPFFVKELV. Topologically, residues 316–327 are extracellular; it reads VNICEKCKISEE. A helical transmembrane segment spans residues 328-350; sequence MSNFLAWLGYLNSLINPLIYTIF. The NPxxY motif; important for ligand-induced conformation changes and signaling motif lies at 343-347; sequence NPLIY. The Cytoplasmic portion of the chain corresponds to 351-366; the sequence is NEDFKKAFQKLVRCRN.

This sequence belongs to the G-protein coupled receptor 1 family.

It is found in the cell membrane. Its function is as follows. G-protein coupled receptor for 5-hydroxytryptamine (serotonin). Also functions as a receptor for various alkaloids and psychoactive substances. Ligand binding causes a conformation change that triggers signaling via guanine nucleotide-binding proteins (G proteins) and modulates the activity of downstream effectors, such as adenylate cyclase. HTR1F is coupled to G(i)/G(o) G alpha proteins and mediates inhibitory neurotransmission by inhibiting adenylate cyclase activity. This chain is 5-hydroxytryptamine receptor 1F (Htr1f), found in Rattus norvegicus (Rat).